We begin with the raw amino-acid sequence, 513 residues long: Carotenoid isomerooxygenase (513 aa).

4 residues coordinate Fe cation: His-184, His-242, His-312, and His-503.

This sequence belongs to the carotenoid oxygenase family. Fe(2+) is required as a cofactor.

The enzyme catalyses all-trans-zeaxanthin + O2 = (3R)-11-cis-3-hydroxyretinal + (3R)-all-trans-3-hydroxyretinal. It functions in the pathway cofactor metabolism; retinol metabolism. Functionally, catalyzes the oxidative cleavage at the 15,15'-double bond of carotenoids and the simultaneous all-trans to 11-cis isomerization of one cleavage product. Carotenoids like 11-cis retinal can promote visual pigment biogenesis in the dark. Essential for the biosynthesis of the 3-hydroxyretinal chromophore of rhodopsin from zeaxanthin and for proper photoreceptor development. In Galleria mellonella (Greater wax moth), this protein is Carotenoid isomerooxygenase (ninaB).